Reading from the N-terminus, the 270-residue chain is Tetracenomycin polyketide synthesis O-methyltransferase TcmP (270 aa).

Its pathway is antibiotic biosynthesis; tetracenomycin C biosynthesis. Its function is as follows. O-methyltransferase that catalyzes the methylation of the C-9 carboxy group of tetracenomycin E (TCM E) to yield TCM A2. Catalyzes as well the following side reactions: methylation of 8-O-methyl-TCM D3 to 9-carboxymethyl-8-O-methyl-TCM D3; and of TCM B3 to 9-carboxymethyl-TCM B3. This Streptomyces glaucescens protein is Tetracenomycin polyketide synthesis O-methyltransferase TcmP (tcmP).